A 408-amino-acid polypeptide reads, in one-letter code: LL-diaminopimelate aminotransferase (408 aa).

Residues Tyr15 and Gly42 each contribute to the substrate site. Pyridoxal 5'-phosphate contacts are provided by residues Tyr72, 108-109, Tyr132, Asn187, Tyr218, and 246-248; these read SK and SFS. Substrate contacts are provided by Lys109, Tyr132, and Asn187. Lys249 bears the N6-(pyridoxal phosphate)lysine mark. Pyridoxal 5'-phosphate contacts are provided by Arg257 and Asn292. Residues Asn292 and Arg388 each coordinate substrate.

Belongs to the class-I pyridoxal-phosphate-dependent aminotransferase family. LL-diaminopimelate aminotransferase subfamily. In terms of assembly, homodimer. Pyridoxal 5'-phosphate serves as cofactor.

It carries out the reaction (2S,6S)-2,6-diaminopimelate + 2-oxoglutarate = (S)-2,3,4,5-tetrahydrodipicolinate + L-glutamate + H2O + H(+). It participates in amino-acid biosynthesis; L-lysine biosynthesis via DAP pathway; LL-2,6-diaminopimelate from (S)-tetrahydrodipicolinate (aminotransferase route): step 1/1. Functionally, involved in the synthesis of meso-diaminopimelate (m-DAP or DL-DAP), required for both lysine and peptidoglycan biosynthesis. Catalyzes the direct conversion of tetrahydrodipicolinate to LL-diaminopimelate. The chain is LL-diaminopimelate aminotransferase from Leptospira biflexa serovar Patoc (strain Patoc 1 / Ames).